A 97-amino-acid polypeptide reads, in one-letter code: DNA-directed RNA polymerase subunit omega (97 aa).

It belongs to the RNA polymerase subunit omega family. As to quaternary structure, the RNAP catalytic core consists of 2 alpha, 1 beta, 1 beta' and 1 omega subunit. When a sigma factor is associated with the core the holoenzyme is formed, which can initiate transcription.

It catalyses the reaction RNA(n) + a ribonucleoside 5'-triphosphate = RNA(n+1) + diphosphate. In terms of biological role, promotes RNA polymerase assembly. Latches the N- and C-terminal regions of the beta' subunit thereby facilitating its interaction with the beta and alpha subunits. The protein is DNA-directed RNA polymerase subunit omega of Coxiella burnetii (strain CbuK_Q154) (Coxiella burnetii (strain Q154)).